A 1218-amino-acid polypeptide reads, in one-letter code: Structural maintenance of chromosomes protein 2 (1218 aa).

Glycine 32–serine 39 is an ATP binding site. The stretch at valine 209–isoleucine 517 forms a coiled coil. One can recognise an SMC hinge domain in the interval aspartate 525–isoleucine 654. 2 coiled-coil regions span residues leucine 693–lysine 949 and arginine 978–glutamate 1045.

This sequence belongs to the SMC family. SMC2 subfamily.

The protein localises to the nucleus. Functionally, may play a role in the conversion of interphase chromatin into condensed chromosomes. The polypeptide is Structural maintenance of chromosomes protein 2 (Plasmodium falciparum (isolate 3D7)).